Here is a 602-residue protein sequence, read N- to C-terminus: Aspartate--tRNA(Asp/Asn) ligase (602 aa).

Glu-176 contacts L-aspartate. The segment at 200–203 is aspartate; that stretch reads QQFK. Residues Arg-222 and His-452 each coordinate L-aspartate. Residue 222-224 coordinates ATP; it reads RDE. Residue Glu-490 participates in ATP binding. Arg-497 lines the L-aspartate pocket. Residue 542-545 participates in ATP binding; it reads GIDR.

It belongs to the class-II aminoacyl-tRNA synthetase family. Type 1 subfamily. In terms of assembly, homodimer.

It localises to the cytoplasm. The enzyme catalyses tRNA(Asx) + L-aspartate + ATP = L-aspartyl-tRNA(Asx) + AMP + diphosphate. Its function is as follows. Aspartyl-tRNA synthetase with relaxed tRNA specificity since it is able to aspartylate not only its cognate tRNA(Asp) but also tRNA(Asn). Reaction proceeds in two steps: L-aspartate is first activated by ATP to form Asp-AMP and then transferred to the acceptor end of tRNA(Asp/Asn). The protein is Aspartate--tRNA(Asp/Asn) ligase of Rickettsia bellii (strain OSU 85-389).